Consider the following 264-residue polypeptide: Phosphonoacetaldehyde hydrolase (264 aa).

Residue Asp9 is the Nucleophile of the active site. Asp9 and Ala11 together coordinate Mg(2+). The active-site Schiff-base intermediate with substrate is Lys50. A Mg(2+)-binding site is contributed by Asp183.

Belongs to the HAD-like hydrolase superfamily. PhnX family. Homodimer. It depends on Mg(2+) as a cofactor.

It carries out the reaction phosphonoacetaldehyde + H2O = acetaldehyde + phosphate + H(+). Involved in phosphonate degradation. The polypeptide is Phosphonoacetaldehyde hydrolase (Bacillus cereus (strain AH187)).